The chain runs to 483 residues: ATP synthase subunit beta (483 aa).

169–176 (GGAGVGKT) is a binding site for ATP.

Belongs to the ATPase alpha/beta chains family. F-type ATPases have 2 components, CF(1) - the catalytic core - and CF(0) - the membrane proton channel. CF(1) has five subunits: alpha(3), beta(3), gamma(1), delta(1), epsilon(1). CF(0) has three main subunits: a(1), b(2) and c(9-12). The alpha and beta chains form an alternating ring which encloses part of the gamma chain. CF(1) is attached to CF(0) by a central stalk formed by the gamma and epsilon chains, while a peripheral stalk is formed by the delta and b chains.

It is found in the cell membrane. The enzyme catalyses ATP + H2O + 4 H(+)(in) = ADP + phosphate + 5 H(+)(out). Its function is as follows. Produces ATP from ADP in the presence of a proton gradient across the membrane. The catalytic sites are hosted primarily by the beta subunits. The protein is ATP synthase subunit beta of Rhodococcus jostii (strain RHA1).